A 318-amino-acid polypeptide reads, in one-letter code: Aspartate carbamoyltransferase catalytic subunit (318 aa).

Residues Arg64 and Thr65 each coordinate carbamoyl phosphate. Lys92 is an L-aspartate binding site. Residues Arg114, His142, and Gln145 each contribute to the carbamoyl phosphate site. Residues Arg175 and Arg229 each coordinate L-aspartate. Carbamoyl phosphate is bound by residues Gly270 and Pro271.

It belongs to the aspartate/ornithine carbamoyltransferase superfamily. ATCase family. In terms of assembly, heterododecamer (2C3:3R2) of six catalytic PyrB chains organized as two trimers (C3), and six regulatory PyrI chains organized as three dimers (R2).

The catalysed reaction is carbamoyl phosphate + L-aspartate = N-carbamoyl-L-aspartate + phosphate + H(+). Its pathway is pyrimidine metabolism; UMP biosynthesis via de novo pathway; (S)-dihydroorotate from bicarbonate: step 2/3. In terms of biological role, catalyzes the condensation of carbamoyl phosphate and aspartate to form carbamoyl aspartate and inorganic phosphate, the committed step in the de novo pyrimidine nucleotide biosynthesis pathway. The polypeptide is Aspartate carbamoyltransferase catalytic subunit (Rhodospirillum centenum (strain ATCC 51521 / SW)).